Consider the following 1278-residue polypeptide: Mediator of RNA polymerase II transcription subunit 16 (1278 aa).

The span at Met1 to Val10 shows a compositional bias: acidic residues. Disordered stretches follow at residues Met1–Ile21, Thr530–Lys557, and Ser839–Thr861. Over residues Ala547–Lys557 the composition is skewed to basic and acidic residues. A compositionally biased stretch (polar residues) spans Gly841–Thr861.

The protein belongs to the plant Mediator complex subunit 16 family. As to quaternary structure, component of the Mediator complex.

It is found in the nucleus. Component of the Mediator complex, a coactivator involved in the regulated transcription of nearly all RNA polymerase II-dependent genes. Mediator functions as a bridge to convey information from gene-specific regulatory proteins to the basal RNA polymerase II transcription machinery. The Mediator complex, having a compact conformation in its free form, is recruited to promoters by direct interactions with regulatory proteins and serves for the assembly of a functional preinitiation complex with RNA polymerase II and the general transcription factors. Involved in the regulation of the circadian clock, in the control of flowering time, in freezing- and osmotic-stress tolerance and in both salicylic acid- and jasmonate-mediated defense gene expression. In Arabidopsis thaliana (Mouse-ear cress), this protein is Mediator of RNA polymerase II transcription subunit 16 (MED16).